The sequence spans 65 residues: Large ribosomal subunit protein bL31 (65 aa).

Residues Cys16, Cys18, Cys36, and Cys39 each coordinate Zn(2+).

This sequence belongs to the bacterial ribosomal protein bL31 family. Type A subfamily. As to quaternary structure, part of the 50S ribosomal subunit. Requires Zn(2+) as cofactor.

Functionally, binds the 23S rRNA. The protein is Large ribosomal subunit protein bL31 of Carboxydothermus hydrogenoformans (strain ATCC BAA-161 / DSM 6008 / Z-2901).